A 2793-amino-acid polypeptide reads, in one-letter code: MKGEITLDGAIALLSSDKTKDRTDGLADLKHILQKNKRNSNLQSMSDKACHKIFESLFRLVSTEKTFYNRANSKGASSSKAAATRLSACASVVRTAVETFLRNLRIKSVRAILDHITNVLVSPDSSLFELLSVDYTKCLSTILHYPPHVEHLGVEEWESVLKFCLKVVNVRNDHNSQQSTWSPHSSVMDDYIGASGGRSTPSRMTPSLAVREKPKGPTGVVEEALSCIKILSGVPNAPLQDNAESILLGLASYVGSPSLSGSGHQTAFSAINAVAMGIIFDNSELVRVTLLDLVPVIRQHWTTKLMGLKDELLVTTMLIVTFLIDEIRRKPDEALIAVIDGLIHTLQREYFRRSEKDILQVDELVFDTNSIGQHEKFRLWPRLESPRSEHNWTVVWIMARLLELSEELTTRLSTHCPPEAETPSKRQRISSKIDDVFRDSTASFGIRRVCALQLIPFLLNHYACIDSKVSLLERLIPNINDDNATISSWTMIAIACIAASPQADKPPLKRYWQQAWDLTSRASTSQLTSRAACYLQNSILQYSLLDYAAVAETINSMLSFVRLNGPSTVSDASLELWASVIRMTAQINPGSVSNASVQICELVDIYDIWDAETTVSIQKSSQSDPNDLGILDLLQAKSESFLHTWQSLSEDKSRHVTPDIVQILTSFCITVALYTSCLPEQPGPRLQTLLSNSRPTAIHRALYGLLTPLSEVLESQRQSHKQRLYALNDDTMDLDDPFGPSTDQVEEASNILCTNRSDLPLFQDSASFHRYMTILISIYNRMYSQQSEPQQHVTRALEDYLNDLDEVDLLAAHDLLPYVYQSCARTDRQTQLVLLENLGEKCLQTYELERCENSHLLCIQMMCSLAMSWTRGTQDSLSDSAADIYTWFTTIFLKKGRASSSVLIAFAKLLGVILSLNPAYSSDQSSPSPKTTLFKIISDGEVLVKFNAGSLVPQLFGQFLLEDHDNVFNDVLECLPRDPTWEEGIAVRLFLLAQLASKWHTLLRRSIYHIFETPAQVHHSLWYAEKCLRSVSDALGLQDAKEIFRLFSSQILYTWTETQSIKSMPFSIFGYANLNDMICDAQDEIVGQIMMRASESDAAELSEILGRPFVGLLTDSFYKAEAYTIAHDISTPPREGSQPKGVENRLKKILGAEVFVTLIEAQFPQIVATFFGSLDFFQQVEKAFSKRESFQEALVTLKRITEKGAARTVLPPNQQPSFRARYLLDELEFLCKRSGYELETIWTPTLASYVCRTLLESIHPALGSLHACSVLRKIKILICVAGPVMLSDYPFEMIIHGLQPFLVDISCSEDAVAIFWYLLEAGKTYLCEQPGLMAGIAVSTSLSLGRFLASPPVNSRQESQLQAVVGNLRTFCRWFDGYLRSYTSPALDDESSRSFRRFTCSLQTIVEQESSGSGANETDLLLEVLKDRESKSGLLSKPISDRVISLLCSTSKAALGYHLTTIERDEDAILNAVTVCQTLRDFNPGTEYRSWAARVIGRAFAATGKISDALLREQDLTLFRSSSTQSGTDILCRSKANILEVLGSKLLNSRQTGPIERTLQLIISNLANFPDFEPCVSAISPSVMKALTWSPYQCPGISLNALEAKELENVHGWDLSLSPSYWARNVGLFLSKAAAEDPVIGSLSNILYLIPDLAVQLLPYILHDALLAEIRGKVAEVRDSISQIFNETLRAGAENSIPHARLIIKCVLYLRNQPKPGEETIVDRDDWLDINYAVASSAASRCRLPKTALMFLETHVSRCTASSRRSSVAKYDLPAGLLHDIFKNIDDPDFFYGVQQTSSLDSVIETLEHESSGFKNLLFQSAQYDSEIQMTGSGNAYGVLKALNSTNLQGIANSMIGALGNSSDTAVPLGSMLKAATNLRQWEIPISPLNTSPPATIFRAFQALNTPGPLVDMRASIGESYRSNLNLINSDRRSATSLRTAMRTLGILTEIEEVLGSGSAAEIDQKWEEISARTSWLKNTDVQEVGEILSSHETLFSSIKQKDYLRSAFNLSDIDAQLLEVKVIRQSLHIARNHGIAQASLRSAVYLSKLANHSVSLGLNIEGVAKFDLANVLWDQGEMAPSIQILQQLKDRNDLHKQAIPISRAELLVTLSQGHHIAEARLEKPEAIIQNYLTPAVKELKGRSEGEDAGRVYHGFAIFCDQQLQNPDGLEDFARIEQLRNRKEKEVVALDAMLKTAEGKERDNLKFHRTKTKQWFDLDDREYQRLKRSREAFLQQCLENYLICLRESEAYNNDVLRFCALWLAQSHSDIANSAVSKYIAGVPSRKFAPLMNQLTSRLLDVSDDFQALLSELIYRICSDHPFHGMYQIFASSKSKGGRDQSALSRNRAAAKLADIMRNDRHIGPLWVAVHNTNINYVRFAVERLDDKAKSGAKIRLNKLAPGIRLEQDAVNQRLPPPTMKIDIRVDCDYSDVPKLAKYLPDFTVASGVSAPKIVTAIASNGVRYKQLFKGGNDDLRQDAIMEQVFEQVSSLLKDHQATRQRNLGIRAYKVLPLTSNAGIIEFVPNTIPLNDFLMPAHQRYYPRDMKPSACRKHIADVQTRSFEQRVRTYRQVIEKFHPVMRYFFMEKFNNPDDWFGRRLSYTQSTAAISILGHVLGLGDRHGHNILLDERTGEVVHIDLGVAFEQGRVLPVPEVVPFRLTRDLVDGMGITKTEGVFRRCCEFTLEALRQESYSIMTILDVLRYDPLYSWTVSPLRMKKMQEQDTSDGPPVLPGSTTDQQRPTNEPSEADRALTVVAKKLSKTLSVTATVNELIQQATDEKNLAVLYCGWAAYA.

The 601-residue stretch at 1734-2334 (VASSAASRCR…MYQIFASSKS (601 aa)) folds into the FAT domain. One can recognise a PI3K/PI4K catalytic domain in the interval 2438–2750 (YLPDFTVASG…PTNEPSEADR (313 aa)). The interval 2444-2450 (VASGVSA) is G-loop. The interval 2616 to 2624 (GLGDRHGHN) is catalytic loop. An activation loop region spans residues 2636–2660 (HIDLGVAFEQGRVLPVPEVVPFRLT). Residues 2718–2748 (KMQEQDTSDGPPVLPGSTTDQQRPTNEPSEA) form a disordered region. Residues 2733-2745 (GSTTDQQRPTNEP) are compositionally biased toward polar residues. In terms of domain architecture, FATC spans 2761–2793 (KTLSVTATVNELIQQATDEKNLAVLYCGWAAYA).

It belongs to the PI3/PI4-kinase family. ATM subfamily. In terms of assembly, associates with DNA double-strand breaks.

The protein localises to the nucleus. The protein resides in the chromosome. It localises to the telomere. It catalyses the reaction L-seryl-[protein] + ATP = O-phospho-L-seryl-[protein] + ADP + H(+). The enzyme catalyses L-threonyl-[protein] + ATP = O-phospho-L-threonyl-[protein] + ADP + H(+). Serine/threonine protein kinase which activates checkpoint signaling upon genotoxic stresses such as ionizing radiation (IR), ultraviolet light (UV), or DNA replication stalling, thereby acting as a DNA damage sensor. Recognizes the substrate consensus sequence [ST]-Q. Phosphorylates histone H2A to form H2AS128ph (gamma-H2A) at sites of DNA damage, involved in the regulation of DNA damage response mechanism. Required for the control of telomere length and genome stability. The chain is Serine/threonine-protein kinase tel1 (tel1) from Emericella nidulans (strain FGSC A4 / ATCC 38163 / CBS 112.46 / NRRL 194 / M139) (Aspergillus nidulans).